The primary structure comprises 237 residues: D-aminoacyl-tRNA deacylase (237 aa).

The protein belongs to the DtdA deacylase family. As to quaternary structure, monomer. Zn(2+) serves as cofactor.

It carries out the reaction a D-aminoacyl-tRNA + H2O = a tRNA + a D-alpha-amino acid + H(+). The catalysed reaction is glycyl-tRNA(Ala) + H2O = tRNA(Ala) + glycine + H(+). Its function is as follows. D-aminoacyl-tRNA deacylase with broad substrate specificity. By recycling D-aminoacyl-tRNA to D-amino acids and free tRNA molecules, this enzyme counteracts the toxicity associated with the formation of D-aminoacyl-tRNA entities in vivo. The chain is D-aminoacyl-tRNA deacylase from Metallosphaera sedula (strain ATCC 51363 / DSM 5348 / JCM 9185 / NBRC 15509 / TH2).